The sequence spans 216 residues: Purine nucleoside phosphorylase DeoD-type (216 aa).

Residues Arg4, Arg23, and 67-70 (RVGT) contribute to the phosphate site. A purine D-ribonucleoside is bound by residues 159–161 (EME) and 183–184 (SD). Catalysis depends on Asp184, which acts as the Proton donor.

Belongs to the PNP/UDP phosphorylase family. In terms of assembly, homohexamer; trimer of homodimers.

It carries out the reaction a purine D-ribonucleoside + phosphate = a purine nucleobase + alpha-D-ribose 1-phosphate. It catalyses the reaction a purine 2'-deoxy-D-ribonucleoside + phosphate = a purine nucleobase + 2-deoxy-alpha-D-ribose 1-phosphate. Its function is as follows. Catalyzes the reversible phosphorolytic breakdown of the N-glycosidic bond in the beta-(deoxy)ribonucleoside molecules, with the formation of the corresponding free purine bases and pentose-1-phosphate. The protein is Purine nucleoside phosphorylase DeoD-type of Streptococcus thermophilus.